A 246-amino-acid polypeptide reads, in one-letter code: DNA repair protein RecO (246 aa).

The protein belongs to the RecO family.

In terms of biological role, involved in DNA repair and RecF pathway recombination. In Proteus mirabilis (strain HI4320), this protein is DNA repair protein RecO.